The chain runs to 289 residues: Phosphatidylserine decarboxylase proenzyme (289 aa).

Active-site charge relay system; for autoendoproteolytic cleavage activity residues include Asp-89, His-146, and Ser-252. Ser-252 (schiff-base intermediate with substrate; via pyruvic acid; for decarboxylase activity) is an active-site residue. The residue at position 252 (Ser-252) is a Pyruvic acid (Ser); by autocatalysis.

Belongs to the phosphatidylserine decarboxylase family. PSD-B subfamily. Prokaryotic type I sub-subfamily. Heterodimer of a large membrane-associated beta subunit and a small pyruvoyl-containing alpha subunit. Requires pyruvate as cofactor. Post-translationally, is synthesized initially as an inactive proenzyme. Formation of the active enzyme involves a self-maturation process in which the active site pyruvoyl group is generated from an internal serine residue via an autocatalytic post-translational modification. Two non-identical subunits are generated from the proenzyme in this reaction, and the pyruvate is formed at the N-terminus of the alpha chain, which is derived from the carboxyl end of the proenzyme. The autoendoproteolytic cleavage occurs by a canonical serine protease mechanism, in which the side chain hydroxyl group of the serine supplies its oxygen atom to form the C-terminus of the beta chain, while the remainder of the serine residue undergoes an oxidative deamination to produce ammonia and the pyruvoyl prosthetic group on the alpha chain. During this reaction, the Ser that is part of the protease active site of the proenzyme becomes the pyruvoyl prosthetic group, which constitutes an essential element of the active site of the mature decarboxylase.

Its subcellular location is the cell membrane. It catalyses the reaction a 1,2-diacyl-sn-glycero-3-phospho-L-serine + H(+) = a 1,2-diacyl-sn-glycero-3-phosphoethanolamine + CO2. The protein operates within phospholipid metabolism; phosphatidylethanolamine biosynthesis; phosphatidylethanolamine from CDP-diacylglycerol: step 2/2. Its function is as follows. Catalyzes the formation of phosphatidylethanolamine (PtdEtn) from phosphatidylserine (PtdSer). In Shewanella denitrificans (strain OS217 / ATCC BAA-1090 / DSM 15013), this protein is Phosphatidylserine decarboxylase proenzyme.